Here is a 572-residue protein sequence, read N- to C-terminus: Urease subunit alpha (572 aa).

The 437-residue stretch at 136–572 (GGIDTHIHWI…VPLAQRYFLF (437 aa)) folds into the Urease domain. 3 residues coordinate Ni(2+): His141, His143, and Lys224. Lys224 is modified (N6-carboxylysine). His226 lines the substrate pocket. Ni(2+)-binding residues include His253 and His279. The active-site Proton donor is His327. Residue Asp367 coordinates Ni(2+).

It belongs to the metallo-dependent hydrolases superfamily. Urease alpha subunit family. In terms of assembly, heterotrimer of UreA (gamma), UreB (beta) and UreC (alpha) subunits. Three heterotrimers associate to form the active enzyme. Requires Ni cation as cofactor. Post-translationally, carboxylation allows a single lysine to coordinate two nickel ions.

The protein resides in the cytoplasm. The catalysed reaction is urea + 2 H2O + H(+) = hydrogencarbonate + 2 NH4(+). It participates in nitrogen metabolism; urea degradation; CO(2) and NH(3) from urea (urease route): step 1/1. This Actinobacillus pleuropneumoniae serotype 7 (strain AP76) protein is Urease subunit alpha.